Consider the following 297-residue polypeptide: MFSVLSCGRLVARAVFGGLSQTDSRDYSLVTASCGFGKDARKGILKKGMCYGDDACFIARHRTADVLGVADGVGGWRDYGVDPSQFSETLMRTCERLVKEGRFVPTNPVGILTSSYRELLQNKVPLLGSSTACLVVLDRTSHRLHTANLGDSGFLVVRAGEVVHRSDEQQHYFNTPFQLSIAPPEAEGAVLSDSPDAADSNSFDVQLGDIILTATDGLFDNMPDYMILQELKKLKNTNYESIQQTARSIAEQAHDLAYDPNYMSPFAQFACDYGLNVRGGKPDDITVLLSIVAEYTD.

A mitochondrion-targeting transit peptide spans 1–27 (MFSVLSCGRLVARAVFGGLSQTDSRDY). A PPM-type phosphatase domain is found at 28-292 (SLVTASCGFG…DDITVLLSIV (265 aa)). Positions 71, 72, and 216 each coordinate Mn(2+).

Belongs to the PP2C family. Requires Mg(2+) as cofactor. It depends on Mn(2+) as a cofactor.

The protein resides in the mitochondrion matrix. The catalysed reaction is O-phospho-L-seryl-[protein] + H2O = L-seryl-[protein] + phosphate. The enzyme catalyses O-phospho-L-threonyl-[protein] + H2O = L-threonyl-[protein] + phosphate. Protein phosphatase which positively regulates biosynthesis of the ubiquinone, coenzyme Q. Dephosphorylates the ubiquinone biosynthesis protein coq7 which is likely to lead to its activation. In Xenopus laevis (African clawed frog), this protein is Protein phosphatase PTC7 homolog (pptc7).